Here is a 567-residue protein sequence, read N- to C-terminus: GBF-interacting protein 1 (567 aa).

3 disordered regions span residues 70–150 (ERKK…PSGI), 164–192 (DKVD…SKES), and 545–567 (PIGP…GNNY). 2 stretches are compositionally biased toward polar residues: residues 91–102 (FASSYTDASNGR) and 121–136 (TASS…TKPS). Basic and acidic residues predominate over residues 182-191 (DVVEPDKSKE). Over residues 550 to 567 (HVTNQQPQAARTNLGNNY) the composition is skewed to polar residues.

Belongs to the GIP1 family. Monomer, homodimer, homooligomer. Under non-reducing conditions, predominantly present in high molecular weight forms, but predominates in low molecular weight monomers under reducing conditions. Interacts with BZIP16, BZIP68 and GBF1. Interacts with LBD18. In terms of tissue distribution, expressed in roots, leaves, stems and flowers.

It localises to the nucleus. Plant specific protein that enhances G-box-binding factor (GBF) DNA binding activity. May function as a nuclear chaperone or lever and regulate the multimeric state of GBFs. May contribute to bZIP-mediated gene regulation. Is able to refold denatured rhodanese in vitro. Reduces DNA-binding activity of BZIP16, BZIP68 and GBF1 under non-reducing conditions through direct physical interaction. Acts as a negative co-regulator in red and blue light-mediated hypocotyl elongation. Functions to promote hypocotyl elongation during the early stages of seedling development by regulating the repression effect by BZIP16 and the activation effect by BZIP68 and GBF1 on LHCB2.4 expression. Enhances transcriptional activity of LBD18 in the EXP14 promoter. May act as a transcriptional coactivator of LBD18. The sequence is that of GBF-interacting protein 1 from Arabidopsis thaliana (Mouse-ear cress).